The sequence spans 1477 residues: Oligomycin resistance ATP-dependent permease YOR1 (1477 aa).

Residues 1 to 48 are disordered; the sequence is MTITVGDAVSETELENKSQNVVLSPKASASSDISTDVDKDTSSSWDDK. At 1–206 the chain is on the cytoplasmic side; it reads MTITVGDAVS…RALLFTFKKQ (206 aa). A phosphoserine mark is found at S10 and S24. The span at 36 to 48 shows a compositional bias: basic and acidic residues; that stretch reads DVDKDTSSSWDDK. T53 carries the phosphothreonine modification. Positions 71 to 73 match the Diacidic ER export motif DxE motif; sequence DIE. Residues 207 to 227 traverse the membrane as a helical segment; the sequence is YFMSIVFAILANCTSGFNPMI. In terms of domain architecture, ABC transmembrane type-1 1 spans 207–493; it reads YFMSIVFAIL…LPIAIGTGID (287 aa). Residues 228–249 are Extracellular-facing; sequence TKRLIEFVEEKAIFHSMHVNKG. Residues 250 to 270 form a helical membrane-spanning segment; sequence IGYAIGACLMMFVNGLTFNHF. Residues 271-328 are Cytoplasmic-facing; the sequence is FHTSQLTGVQAKSILTKAAMKKMFNASNYARHCFPNGKVTSFVTTDLARIEFALSFQP. Residues 329-349 traverse the membrane as a helical segment; that stretch reads FLAGFPAILAICIVLLIVNLG. The Extracellular segment spans residues 350–357; it reads PIALVGIG. The helical transmembrane segment at 358-370 threads the bilayer; it reads IFFGGFFISLFAF. Over 371-433 the chain is Cytoplasmic; sequence KLILGFRIAA…KVRKMQLSRN (63 aa). The helical transmembrane segment at 434–454 threads the bilayer; that stretch reads FLIAMAMSLPSIASLVTFLAM. The Extracellular portion of the chain corresponds to 455–478; that stretch reads YKVNKGGRQPGNIFASLSLFQVLS. The chain crosses the membrane as a helical span at residues 479–499; it reads LQMFFLPIAIGTGIDMIIGLG. Residues 500–615 are Cytoplasmic-facing; that stretch reads RLQSLLEAPE…DLNFDIKKGE (116 aa). The tract at residues 552–595 is disordered; the sequence is KGEAKDEGKKNKKKRKDTWGKPSASTNKAKRLDNMLKDRDGPED. Over residues 581–595 the composition is skewed to basic and acidic residues; the sequence is KRLDNMLKDRDGPED. One can recognise an ABC transporter 1 domain in the interval 581–808; the sequence is KRLDNMLKDR…NQTLINLLQF (228 aa). Residues 616–636 traverse the membrane as a helical segment; sequence FIMITGPIGTGKSSLLNAMAG. 621 to 628 contacts ATP; that stretch reads GPIGTGKS. Over 637 to 892 the chain is Extracellular; the sequence is SMRKTDGKVE…EYIKAAVGKW (256 aa). N-linked (GlcNAc...) asparagine glycosylation is found at N661, N759, and N799. Residues 893–913 form a helical membrane-spanning segment; the sequence is GFIALPLYAILVVGTTFCSLF. Residues 897 to 1175 enclose the ABC transmembrane type-1 2 domain; that stretch reads LPLYAILVVG…ILRAMTQTEN (279 aa). Over 914-940 the chain is Cytoplasmic; it reads SSVWLSYWTENKFKNRPPSFYMGLYSF. Residues 941–961 traverse the membrane as a helical segment; it reads FVFAAFIFMNGQFTILCAMGI. Residues 962 to 1027 are Extracellular-facing; the sequence is MASKWLNLRA…ANIVGVCVMC (66 aa). A helical membrane pass occupies residues 1028 to 1048; sequence IVYLPWFAIAIPFLLVIFVLI. The Cytoplasmic segment spans residues 1049-1117; it reads ADHYQSSGRE…GYLVVVLQRW (69 aa). A helical transmembrane segment spans residues 1118 to 1138; sequence VGIFLDMVAIAFALIITLLCV. Residues 1139–1141 lie on the Extracellular side of the membrane; it reads TRA. The chain crosses the membrane as a helical span at residues 1142–1162; that stretch reads FPISAASVGVLLTYVLQLPGL. Residues 1163-1477 lie on the Cytoplasmic side of the membrane; that stretch reads LNTILRAMTQ…IVENDFENRS (315 aa). Positions 1213-1464 constitute an ABC transporter 2 domain; that stretch reads IIFENVDFAY…EDSIFRSMCS (252 aa). Residue 1247–1254 participates in ATP binding; the sequence is GRTGAGKS.

This sequence belongs to the ABC transporter superfamily. ABCC family. Conjugate transporter (TC 3.A.1.208) subfamily.

The protein localises to the cell membrane. The enzyme catalyses a 1,2-diacyl-sn-glycero-3-phosphoethanolamine(in) + ATP + H2O = a 1,2-diacyl-sn-glycero-3-phosphoethanolamine(out) + ADP + phosphate + H(+). It catalyses the reaction Cd(2+)(in) + ATP + H2O = Cd(2+)(out) + ADP + phosphate + H(+). It carries out the reaction an S-substituted glutathione(in) + ATP + H2O = an S-substituted glutathione(out) + ADP + phosphate + H(+). Functions as a pleiotropic drug pump at the plasma membrane to clear toxic substances from the cytosol. Organic anion transporter involved in the detoxification of a wide range of toxic environmental organic anions that contain carboxyl groups. Required for tolerance to reveromycin A, tautomycin and leptomycin B. Required for oligomycin resistance. Required for rhodamine B resistance. Mediates the ATP-dependent efflux of rhodamine B. Involved in cadmium detoxification. Displays an energy-dependent efflux of cadmium and glutathione, suggesting that YOR1 transports both compounds as a bis-glutathionato-cadmium Cd-(GS)(2) complex. Confers resistance to rhodamine 6G and to doxorubicin. This chain is Oligomycin resistance ATP-dependent permease YOR1, found in Saccharomyces cerevisiae (strain ATCC 204508 / S288c) (Baker's yeast).